The following is a 340-amino-acid chain: Small ribosomal subunit biogenesis GTPase RsgA (340 aa).

Over residues 20–34 (ERAERAERRARRDDT) the composition is skewed to basic and acidic residues. Residues 20–42 (ERAERAERRARRDDTSLDAGDYG) are disordered. In terms of domain architecture, CP-type G spans 116–274 (RGQLKPVAAN…LIDSPGIREF (159 aa)). GTP-binding positions include 163–166 (NKTD) and 216–224 (GQSGVGKSS). C298, C303, H305, and C311 together coordinate Zn(2+).

The protein belongs to the TRAFAC class YlqF/YawG GTPase family. RsgA subfamily. Monomer. Associates with 30S ribosomal subunit, binds 16S rRNA. Zn(2+) is required as a cofactor.

The protein resides in the cytoplasm. In terms of biological role, one of several proteins that assist in the late maturation steps of the functional core of the 30S ribosomal subunit. Helps release RbfA from mature subunits. May play a role in the assembly of ribosomal proteins into the subunit. Circularly permuted GTPase that catalyzes slow GTP hydrolysis, GTPase activity is stimulated by the 30S ribosomal subunit. The protein is Small ribosomal subunit biogenesis GTPase RsgA of Chromohalobacter salexigens (strain ATCC BAA-138 / DSM 3043 / CIP 106854 / NCIMB 13768 / 1H11).